The sequence spans 743 residues: Polyribonucleotide nucleotidyltransferase (743 aa).

The Mg(2+) site is built by Asp489 and Asp495. Positions 556–618 constitute a KH domain; it reads PRIEKMHIGK…PCIDAAIGMI (63 aa). The S1 motif domain occupies 628-698; sequence GETYPGKITS…KTGKFKLSRK (71 aa). Positions 704 to 743 are disordered; the sequence is PEGYVEPQPRERRERREGGREGGRNFERRGGDRDHREPRG.

Belongs to the polyribonucleotide nucleotidyltransferase family. Mg(2+) is required as a cofactor.

The protein localises to the cytoplasm. The enzyme catalyses RNA(n+1) + phosphate = RNA(n) + a ribonucleoside 5'-diphosphate. In terms of biological role, involved in mRNA degradation. Catalyzes the phosphorolysis of single-stranded polyribonucleotides processively in the 3'- to 5'-direction. In Porphyromonas gingivalis (strain ATCC 33277 / DSM 20709 / CIP 103683 / JCM 12257 / NCTC 11834 / 2561), this protein is Polyribonucleotide nucleotidyltransferase.